Consider the following 364-residue polypeptide: Histidinol-phosphate aminotransferase (364 aa).

K226 is subject to N6-(pyridoxal phosphate)lysine.

It belongs to the class-II pyridoxal-phosphate-dependent aminotransferase family. Histidinol-phosphate aminotransferase subfamily. In terms of assembly, homodimer. The cofactor is pyridoxal 5'-phosphate.

It catalyses the reaction L-histidinol phosphate + 2-oxoglutarate = 3-(imidazol-4-yl)-2-oxopropyl phosphate + L-glutamate. It functions in the pathway amino-acid biosynthesis; L-histidine biosynthesis; L-histidine from 5-phospho-alpha-D-ribose 1-diphosphate: step 7/9. In Campylobacter jejuni subsp. jejuni serotype O:23/36 (strain 81-176), this protein is Histidinol-phosphate aminotransferase.